Here is a 65-residue protein sequence, read N- to C-terminus: Large ribosomal subunit protein bL35 (65 aa).

Positions 1–28 are disordered; the sequence is MPKMKTHRGAAKRFKKTGTGKIKRGQSK.

Belongs to the bacterial ribosomal protein bL35 family.

The chain is Large ribosomal subunit protein bL35 from Acidobacterium capsulatum (strain ATCC 51196 / DSM 11244 / BCRC 80197 / JCM 7670 / NBRC 15755 / NCIMB 13165 / 161).